Consider the following 256-residue polypeptide: UPF0246 protein TERTU_4575 (256 aa).

This sequence belongs to the UPF0246 family.

In Teredinibacter turnerae (strain ATCC 39867 / T7901), this protein is UPF0246 protein TERTU_4575.